Here is a 739-residue protein sequence, read N- to C-terminus: Polyribonucleotide nucleotidyltransferase (739 aa).

Mg(2+) is bound by residues D487 and D493. Positions 554–613 (PRIETMQIPTDKIRDVIGTGGKVIREIVEKTGAKINIEDTGVVKIASADGKAIKAAYNWI) constitute a KH domain. In terms of domain architecture, S1 motif spans 623–691 (GVIYDGTIVK…DRGKIRLSMK (69 aa)). Residues 694-739 (DQQTGEDITDKIKAQRDAERAERGDEPREPREGGRHRGERRREAGE) are disordered. Residues 701–739 (ITDKIKAQRDAERAERGDEPREPREGGRHRGERRREAGE) are compositionally biased toward basic and acidic residues.

The protein belongs to the polyribonucleotide nucleotidyltransferase family. Requires Mg(2+) as cofactor.

The protein resides in the cytoplasm. It carries out the reaction RNA(n+1) + phosphate = RNA(n) + a ribonucleoside 5'-diphosphate. Its function is as follows. Involved in mRNA degradation. Catalyzes the phosphorolysis of single-stranded polyribonucleotides processively in the 3'- to 5'-direction. This Methylobacterium radiotolerans (strain ATCC 27329 / DSM 1819 / JCM 2831 / NBRC 15690 / NCIMB 10815 / 0-1) protein is Polyribonucleotide nucleotidyltransferase.